We begin with the raw amino-acid sequence, 529 residues long: Peptide chain release factor 3 (529 aa).

In terms of domain architecture, tr-type G spans 7-275 (EQRRTFGIIS…AVVELAPSPR (269 aa)). GTP-binding positions include 16 to 23 (SHPDAGKT), 84 to 88 (DTPGH), and 138 to 141 (NKLD).

Belongs to the TRAFAC class translation factor GTPase superfamily. Classic translation factor GTPase family. PrfC subfamily.

It is found in the cytoplasm. In terms of biological role, increases the formation of ribosomal termination complexes and stimulates activities of RF-1 and RF-2. It binds guanine nucleotides and has strong preference for UGA stop codons. It may interact directly with the ribosome. The stimulation of RF-1 and RF-2 is significantly reduced by GTP and GDP, but not by GMP. The chain is Peptide chain release factor 3 from Syntrophus aciditrophicus (strain SB).